Consider the following 468-residue polypeptide: 3-isopropylmalate dehydratase large subunit (468 aa).

Residues Cys347, Cys407, and Cys410 each coordinate [4Fe-4S] cluster.

It belongs to the aconitase/IPM isomerase family. LeuC type 1 subfamily. As to quaternary structure, heterodimer of LeuC and LeuD. Requires [4Fe-4S] cluster as cofactor.

The enzyme catalyses (2R,3S)-3-isopropylmalate = (2S)-2-isopropylmalate. It participates in amino-acid biosynthesis; L-leucine biosynthesis; L-leucine from 3-methyl-2-oxobutanoate: step 2/4. Catalyzes the isomerization between 2-isopropylmalate and 3-isopropylmalate, via the formation of 2-isopropylmaleate. The protein is 3-isopropylmalate dehydratase large subunit of Synechococcus elongatus (strain ATCC 33912 / PCC 7942 / FACHB-805) (Anacystis nidulans R2).